The primary structure comprises 438 residues: Death-associated inhibitor of apoptosis 1 (438 aa).

One copy of the BIR 1 repeat lies at 44–110; sequence EETRLKTFTD…QRWSPNCPLL (67 aa). The segment at 194-213 is disordered; the sequence is TATQATGDVQPETCRPSAAS. The BIR 2 repeat unit spans residues 226–293; that stretch reads ETARLRTFEA…ALWLSQCRFV (68 aa). Cysteine 263, cysteine 266, histidine 283, and cysteine 290 together coordinate Zn(2+). Residues 322 to 346 are disordered; sequence GGVAVASTQASEEEQQTSLSSEEAV. Low complexity predominate over residues 327 to 345; that stretch reads ASTQASEEEQQTSLSSEEA. Residues 391-426 form an RING-type zinc finger; that stretch reads CKICYGAEYNTAFLPCGHVVACAKCASSVTKCPLCR.

It belongs to the IAP family. As to quaternary structure, interacts (via BIR 2 domain) with Dronc (via residues 114-125). Rpr, hid and grim can outcompete Dronc for binding Diap1 therefore removing Diap1-mediated ubiquitination. Interacts (via BIR 2 domain) with HtrA2; this displaces any bound Dronc. Interacts with Strica. The N-terminally cleaved form interacts with Ubr3 (via UBR-type zinc finger); the interaction promotes the recruitment and uniquitination of substrate capases such as Dronc. In terms of processing, ubiquitinated and degraded by HtrA2 in apoptotic cells; proteolytic cleavage at specific sites in the BIR domain linker region generating inactive fragments. Mutation of one site reduces but does not abolish cleavage as another site is selected by the protease.

It catalyses the reaction S-ubiquitinyl-[E2 ubiquitin-conjugating enzyme]-L-cysteine + [acceptor protein]-L-lysine = [E2 ubiquitin-conjugating enzyme]-L-cysteine + N(6)-ubiquitinyl-[acceptor protein]-L-lysine.. In terms of biological role, anti-apoptotic protein which functions as a caspase regulator, using its E3 ubiquitin-protein ligase activity to smother caspase activity. Binds, ubiquitinates and inactivates initiator caspase Dronc, and effector caspases Drice and Dcp-1. Acts as a Nedd8-E3 ubiquitin-protein ligase for Drice. Suppresses apoptosis by targeting the apoptosome for ubiquitination and inactivation. Plays an important role in cell motility. Overexpression suppresses rpr and hid-dependent cell death in the eye. Interaction of Diap1 with Dronc is required to suppress Dronc-mediated cell death through Diap1-mediated ubiquitination of Dronc. Acts as a positive regulator of Wnt signaling. The protein is Death-associated inhibitor of apoptosis 1 (Diap1) of Drosophila melanogaster (Fruit fly).